The primary structure comprises 200 residues: NAD(P)H dehydrogenase (quinone) (200 aa).

In terms of domain architecture, Flavodoxin-like spans 4-191; sequence VLVLYYSSYG…DIARYQGKHV (188 aa). FMN is bound by residues 10–15 and 79–81; these read SSYGHV and TRF. Tyr-12 contributes to the NAD(+) binding site. A substrate-binding site is contributed by Trp-99. Residues 114–120 and His-135 contribute to the FMN site; that span reads STGTQHG.

Belongs to the WrbA family. FMN serves as cofactor.

It carries out the reaction a quinone + NADH + H(+) = a quinol + NAD(+). The enzyme catalyses a quinone + NADPH + H(+) = a quinol + NADP(+). This chain is NAD(P)H dehydrogenase (quinone), found in Burkholderia multivorans (strain ATCC 17616 / 249).